We begin with the raw amino-acid sequence, 531 residues long: Protein tweety homolog 2-like (531 aa).

Over 1–44 (MASSRQDYIAPWWTYWLHNFPHLNFNFQTVDNTFKPEDASYQQS) the chain is Extracellular. Residues 45 to 65 (LVFLACVSAVALGLCLLLLSV) form a helical membrane-spanning segment. Residues 66–87 (YLTCLCCCRREEDEEVKRPDTC) lie on the Cytoplasmic side of the membrane. A helical membrane pass occupies residues 88–108 (CVTWAAVITGLVICSAVGVGF). At 109 to 213 (YGNSETNDGV…RTAFIEYYRW (105 aa)) the chain is on the extracellular side. N-linked (GlcNAc...) asparagine glycosylation is present at Asn129. Residues 214–234 (LTYLLLLILDLVICLLACLAL) form a helical membrane-spanning segment. The Cytoplasmic segment spans residues 235–239 (AKQSR). A helical membrane pass occupies residues 240 to 260 (WLLTVIMVCGMLTLIMSWASL). Residues 261-389 (GAGTATAVGT…GVCYDGVEGL (129 aa)) lie on the Extracellular side of the membrane. 2 N-linked (GlcNAc...) asparagine glycosylation sites follow: Asn283 and Asn352. The helical transmembrane segment at 390-410 (LYLCLFSLLAACAFCALLCAV) threads the bilayer. Over 411-531 (PRAWMLIAIR…IRHFGTDFQV (121 aa)) the chain is Cytoplasmic.

This sequence belongs to the tweety family.

Its subcellular location is the cell membrane. In terms of biological role, probable large-conductance Ca(2+)-activated chloride channel. In Danio rerio (Zebrafish), this protein is Protein tweety homolog 2-like (ttyh2l).